The sequence spans 293 residues: Cbb3-type cytochrome c oxidase subunit FixP (293 aa).

Basic and acidic residues predominate over residues 1–11; that stretch reads MSTSHESHHAP. The segment at 1-25 is disordered; the sequence is MSTSHESHHAPVDGAGGPSTTGHEW. Residues 43–63 traverse the membrane as a helical segment; that stretch reads FYATIIWAFGYWVAYPAWPLV. Cytochrome c domains follow at residues 114–201 and 209–290; these read LARA…RSLS and PAAK…HTLG. Heme c is bound by residues Cys127, Cys130, His131, Met178, Cys222, Cys225, His226, and Met267.

Belongs to the CcoP / FixP family. Component of the cbb3-type cytochrome c oxidase at least composed of FixN, FixO, FixQ and FixP. It depends on heme c as a cofactor.

The protein localises to the cell inner membrane. It participates in energy metabolism; oxidative phosphorylation. Its function is as follows. C-type cytochrome. Part of the cbb3-type cytochrome c oxidase complex. FixP subunit is required for transferring electrons from donor cytochrome c via its heme groups to FixO subunit. From there, electrons are shuttled to the catalytic binuclear center of FixN subunit where oxygen reduction takes place. The complex also functions as a proton pump. This chain is Cbb3-type cytochrome c oxidase subunit FixP, found in Azorhizobium caulinodans (strain ATCC 43989 / DSM 5975 / JCM 20966 / LMG 6465 / NBRC 14845 / NCIMB 13405 / ORS 571).